Consider the following 221-residue polypeptide: Very-long-chain (3R)-3-hydroxyacyl-CoA dehydratase PASTICCINO 2 (221 aa).

Residues 1–11 (MAGFLSVVRRV) lie on the Cytoplasmic side of the membrane. The chain crosses the membrane as a helical span at residues 12 to 32 (YLTLYNWIVFAGWAQVLYLAI). At 33 to 51 (TTLKETGYENVYDAIEKPL) the chain is on the lumenal side. Residues 52 to 70 (QLAQTAAVLEILHGLVGLV) traverse the membrane as a helical segment. The Cytoplasmic segment spans residues 71-76 (RSPVSA). A helical transmembrane segment spans residues 77–95 (TLPQIGSRLFLTWGILYSF). Over 96–100 (PEVRS) the chain is Lumenal. Residues 101 to 122 (HFLVTSLVISWSITEIIRYSFF) form a helical membrane-spanning segment. Topologically, residues 123–142 (GFKEALGFAPSWHLWLRYSS) are cytoplasmic. The chain crosses the membrane as a helical span at residues 143–165 (FLLLYPTGITSEVGLIYLALPHI). Catalysis depends on residues Tyr147 and Glu154. Residues 166–184 (KTSEMYSVRMPNILNFSFD) lie on the Lumenal side of the membrane. A helical transmembrane segment spans residues 185–204 (FFYATILVLAIYVPGSPHMY). Over 205 to 221 (RYMLGQRKRALSKSKRE) the chain is Cytoplasmic.

Belongs to the very long-chain fatty acids dehydratase HACD family. In terms of assembly, interacts with CDKA-1; but only with the 'Tyr-15' phosphorylated protein. Interacts with PAS1. Part of the fatty acid elongase complex which contains a beta-ketoacyl-CoA synthase (KCS), a beta-ketoacyl-CoA reductase (KCR), a beta-hydroxyacyl-CoA dehydratase (HCD) and an enoyl-CoA reductase (ECR). High expression in young seedlings, roots, root tips, flowers and young siliques. Lower levels in leaves and stems.

The protein resides in the endoplasmic reticulum membrane. Its subcellular location is the cytoplasm. It is found in the nucleus. The enzyme catalyses a very-long-chain (3R)-3-hydroxyacyl-CoA = a very-long-chain (2E)-enoyl-CoA + H2O. It functions in the pathway lipid metabolism; fatty acid biosynthesis. In terms of biological role, catalyzes the third of the four reactions of the long-chain fatty acids elongation cycle. This endoplasmic reticulum-bound enzymatic process, allows the addition of two carbons to the chain of long- and very long-chain fatty acids/VLCFAs per cycle. This enzyme catalyzes the dehydration of the 3-hydroxyacyl-CoA intermediate into trans-2,3-enoyl-CoA, within each cycle of fatty acid elongation. Thereby, it participates in the production of VLCFAs of different chain lengths that are involved in multiple biological processes as precursors of membrane lipids and lipid mediators. May be an anti-phosphatase that prevents CDKA-1 dephosphorylation and activation. Involved in the hormonal control of cell division and differentiation. Required for proliferation control of meristematic and non-meristematic cells. Negative regulator of the cell cycle. This Arabidopsis thaliana (Mouse-ear cress) protein is Very-long-chain (3R)-3-hydroxyacyl-CoA dehydratase PASTICCINO 2 (PAS2).